The chain runs to 122 residues: Large ribosomal subunit protein uL14 (122 aa).

It belongs to the universal ribosomal protein uL14 family. Part of the 50S ribosomal subunit. Forms a cluster with proteins L3 and L19. In the 70S ribosome, L14 and L19 interact and together make contacts with the 16S rRNA in bridges B5 and B8.

Its function is as follows. Binds to 23S rRNA. Forms part of two intersubunit bridges in the 70S ribosome. This chain is Large ribosomal subunit protein uL14, found in Cellvibrio japonicus (strain Ueda107) (Pseudomonas fluorescens subsp. cellulosa).